The primary structure comprises 296 residues: Bifunctional protein FolD (296 aa).

NADP(+) is bound by residues 170–172 and Ser195; that span reads GRS.

The protein belongs to the tetrahydrofolate dehydrogenase/cyclohydrolase family. As to quaternary structure, homodimer.

The enzyme catalyses (6R)-5,10-methylene-5,6,7,8-tetrahydrofolate + NADP(+) = (6R)-5,10-methenyltetrahydrofolate + NADPH. It catalyses the reaction (6R)-5,10-methenyltetrahydrofolate + H2O = (6R)-10-formyltetrahydrofolate + H(+). It participates in one-carbon metabolism; tetrahydrofolate interconversion. Catalyzes the oxidation of 5,10-methylenetetrahydrofolate to 5,10-methenyltetrahydrofolate and then the hydrolysis of 5,10-methenyltetrahydrofolate to 10-formyltetrahydrofolate. This is Bifunctional protein FolD from Rhodospirillum rubrum (strain ATCC 11170 / ATH 1.1.1 / DSM 467 / LMG 4362 / NCIMB 8255 / S1).